The primary structure comprises 377 residues: Palmitoyltransferase ZDHHC16 (377 aa).

The Cytoplasmic portion of the chain corresponds to 1-77; it reads MRGQRSLLLG…VYWLVDNVIR (77 aa). The helical transmembrane segment at 78–98 threads the bilayer; that stretch reads WFGVVFVVLVIVLTGSIVAIA. Residues 99 to 116 lie on the Lumenal side of the membrane; the sequence is YLCVLPLILRTYSVPRLC. Residues 117-137 form a helical membrane-spanning segment; the sequence is WHFFYSHWNLILIVFHYYQAI. Over 138 to 198 the chain is Cytoplasmic; the sequence is TTPPGYPPQG…NNCVGHYNHR (61 aa). The 51-residue stretch at 155 to 205 folds into the DHHC domain; that stretch reads SICKKCIYPKPARTHHCSICNRCVLKMDHHCPWLNNCVGHYNHRYFFSFCF. The S-palmitoyl cysteine intermediate role is filled by Cys185. Residues 199–219 form a helical membrane-spanning segment; sequence YFFSFCFFMTLGCVYCSYGSW. Residues 220 to 266 lie on the Lumenal side of the membrane; that stretch reads DLFREAYAAIEKMKQLDKNKLQAVANQTYHQTPPPTFSFRERMTHKS. A helical membrane pass occupies residues 267–287; sequence LVYLWFLCSSVALALGALTVW. Residues 288–377 are Cytoplasmic-facing; sequence HAVLISRGET…TAHSASVMAV (90 aa).

The protein belongs to the DHHC palmitoyltransferase family. In terms of assembly, interacts with ABL1. Interacts with COPS5/JAB1. As to expression, widely expressed.

The protein localises to the endoplasmic reticulum membrane. It carries out the reaction L-cysteinyl-[protein] + hexadecanoyl-CoA = S-hexadecanoyl-L-cysteinyl-[protein] + CoA. Functionally, palmitoyl acyltransferase that mediates palmitoylation of proteins such as PLN and ZDHHC6. Required during embryonic heart development and cardiac function, possibly by mediating palmitoylation of PLN, thereby affecting PLN phosphorylation and homooligomerization. Also required for eye development. Palmitoylates ZDHHC6, affecting the quaternary assembly of ZDHHC6, its localization, stability and function. May play a role in DNA damage response. May be involved in apoptosis regulation. Involved in the proliferation of neural stem cells by regulating the FGF/ERK pathway. This Homo sapiens (Human) protein is Palmitoyltransferase ZDHHC16.